Consider the following 225-residue polypeptide: Ribosomal RNA large subunit methyltransferase E (225 aa).

S-adenosyl-L-methionine contacts are provided by G76, W78, D99, D115, and D139. K179 functions as the Proton acceptor in the catalytic mechanism.

Belongs to the class I-like SAM-binding methyltransferase superfamily. RNA methyltransferase RlmE family.

Its subcellular location is the cytoplasm. It catalyses the reaction uridine(2552) in 23S rRNA + S-adenosyl-L-methionine = 2'-O-methyluridine(2552) in 23S rRNA + S-adenosyl-L-homocysteine + H(+). Functionally, specifically methylates the uridine in position 2552 of 23S rRNA at the 2'-O position of the ribose in the fully assembled 50S ribosomal subunit. This Afipia carboxidovorans (strain ATCC 49405 / DSM 1227 / KCTC 32145 / OM5) (Oligotropha carboxidovorans) protein is Ribosomal RNA large subunit methyltransferase E.